The following is a 274-amino-acid chain: MRSNNNNPLTRDEILSRYFPQYRPAVAASQGLSGGSCIIAHDTHRIVLRRHHDPDAPPAHFLRHYRALSQLPASLAPRALFYTPGWMAVEYLHGVVNSALPDADELAALLYHLHQQPRFGWRIALSPLLAQYWSCCDPARRTPFWLRRLKQLQKNGEPRPLRLAPLHMDVHGDNIVLTSAGLRLIDWEYAGDGDIALELAAVWVEDERQHRQLADAYAARARIDARQLWRQIRLWHPWVIMLKAGWFEYRWRQTGEQQFIRLADETWRQLRMKG.

Belongs to the thiamine kinase family.

It carries out the reaction thiamine + ATP = thiamine phosphate + ADP + H(+). It participates in cofactor biosynthesis; thiamine diphosphate biosynthesis; thiamine phosphate from thiamine: step 1/1. In terms of biological role, catalyzes the ATP-dependent phosphorylation of thiamine to thiamine phosphate. Is involved in thiamine salvage. The protein is Thiamine kinase of Salmonella dublin (strain CT_02021853).